A 407-amino-acid polypeptide reads, in one-letter code: 3-oxoacyl-[acyl-carrier-protein] synthase 1 (407 aa).

The 405-residue stretch at 1 to 405 (MKRVVITGLG…GTNVSLIIKK (405 aa)) folds into the Ketosynthase family 3 (KS3) domain. Catalysis depends on for beta-ketoacyl synthase activity residues C164, H299, and H335.

It belongs to the thiolase-like superfamily. Beta-ketoacyl-ACP synthases family. In terms of assembly, homodimer.

The protein resides in the cytoplasm. The enzyme catalyses a fatty acyl-[ACP] + malonyl-[ACP] + H(+) = a 3-oxoacyl-[ACP] + holo-[ACP] + CO2. It catalyses the reaction (3Z)-decenoyl-[ACP] + malonyl-[ACP] + H(+) = 3-oxo-(5Z)-dodecenoyl-[ACP] + holo-[ACP] + CO2. It participates in lipid metabolism; fatty acid biosynthesis. In terms of biological role, involved in the type II fatty acid elongation cycle. Catalyzes the elongation of a wide range of acyl-ACP by the addition of two carbons from malonyl-ACP to an acyl acceptor. Can also use unsaturated fatty acids. Catalyzes a key reaction in unsaturated fatty acid (UFA) synthesis, the elongation of the cis-3-decenoyl-ACP produced by FabA. This chain is 3-oxoacyl-[acyl-carrier-protein] synthase 1 (fabB), found in Buchnera aphidicola subsp. Baizongia pistaciae (strain Bp).